Reading from the N-terminus, the 251-residue chain is Probable transcriptional regulatory protein DehaBAV1_0421 (251 aa).

The protein belongs to the TACO1 family.

Its subcellular location is the cytoplasm. In Dehalococcoides mccartyi (strain ATCC BAA-2100 / JCM 16839 / KCTC 5957 / BAV1), this protein is Probable transcriptional regulatory protein DehaBAV1_0421.